The chain runs to 482 residues: Proline--tRNA ligase (482 aa).

Belongs to the class-II aminoacyl-tRNA synthetase family. ProS type 3 subfamily. As to quaternary structure, homodimer.

Its subcellular location is the cytoplasm. It catalyses the reaction tRNA(Pro) + L-proline + ATP = L-prolyl-tRNA(Pro) + AMP + diphosphate. Catalyzes the attachment of proline to tRNA(Pro) in a two-step reaction: proline is first activated by ATP to form Pro-AMP and then transferred to the acceptor end of tRNA(Pro). The chain is Proline--tRNA ligase from Thermofilum pendens (strain DSM 2475 / Hrk 5).